A 352-amino-acid polypeptide reads, in one-letter code: Uroporphyrinogen decarboxylase (352 aa).

Residues 26–30 (RQAGR), Asp76, Tyr153, Ser208, and His323 each bind substrate.

The protein belongs to the uroporphyrinogen decarboxylase family. Homodimer.

It localises to the cytoplasm. It carries out the reaction uroporphyrinogen III + 4 H(+) = coproporphyrinogen III + 4 CO2. It functions in the pathway porphyrin-containing compound metabolism; protoporphyrin-IX biosynthesis; coproporphyrinogen-III from 5-aminolevulinate: step 4/4. Catalyzes the decarboxylation of four acetate groups of uroporphyrinogen-III to yield coproporphyrinogen-III. This Prochlorococcus marinus (strain MIT 9303) protein is Uroporphyrinogen decarboxylase.